Here is a 347-residue protein sequence, read N- to C-terminus: Protein YIPF1 homolog (347 aa).

The segment at 1–115 (MSNYNNKHHD…FSDNVPLNTN (115 aa)) is disordered. The Cytoplasmic portion of the chain corresponds to 1–166 (MSNYNNKHHD…FFNLIRENPD (166 aa)). The segment covering 34-47 (NLFPNTNIDYNDYT) has biased composition (polar residues). 2 stretches are compositionally biased toward low complexity: residues 48 to 67 (QNRGQQQQQQPAYQPDLQFQ) and 76 to 104 (NSNTSPNNNNNNNSNNNNSNKIGGNSSNN). Residues 105–115 (KFSDNVPLNTN) are compositionally biased toward polar residues. The chain crosses the membrane as a helical span at residues 167 to 187 (LYGPFWVLTSLVFIVAVTSNL). Residues 188 to 207 (NEYFHSSDHKSWEVDIQKIV) lie on the Lumenal side of the membrane. A helical membrane pass occupies residues 208–228 (YSAITIYGYSFVIPLILWGIF). The Cytoplasmic segment spans residues 229–232 (KWMN). A helical transmembrane segment spans residues 233-253 (LGLRLLDMLCIYGYTLFIFVP). Residues 254–255 (AS) are Lumenal-facing. The chain crosses the membrane as a helical span at residues 256–276 (ILCVIPLQLVQWIIVAIASIV). The Cytoplasmic portion of the chain corresponds to 277–296 (SGLFLVTNIFTPLKEDFTKR). The helical transmembrane segment at 297–317 (GLIICAVIGALHIGLALVLKL) threads the bilayer. Over 318-347 (YFFANSTENFTISDSSSTPTPTPTNTTKLL) the chain is Lumenal. Residues Asn322, Asn326, and Asn342 are each glycosylated (N-linked (GlcNAc...) asparagine).

It belongs to the YIP1 family.

It is found in the golgi apparatus. Its subcellular location is the cis-Golgi network membrane. The protein resides in the trans-Golgi network membrane. The protein localises to the late endosome membrane. In Dictyostelium discoideum (Social amoeba), this protein is Protein YIPF1 homolog (yipf1).